We begin with the raw amino-acid sequence, 295 residues long: MTLNNVTMRQGTVGMQPQQRWSIPADARHLMVQKDPHPCNLRNRHSTAPEEHCRRSWSSDSTDSVISSESGNTYYRVVLIGEQGVGKSTLANIFAGVHDSMDSDCEVLGEDTYERTLVVDGESATIILLDMWENKGENEWLHDHCMQVGDAYLIVYSITDRASFEKASELRIQLRRARQTEDIPIILVGNKSDLVRCREVSVSEGRACAVVFDCKFIETSAAVQHNVKELFEGIVRQVRLRRDSKEKNERRLAYQKRRESIPRKARRFWGKIVAKNNKNMAFKLKSKSCHDLSVL.

The tract at residues 39-64 is disordered; sequence CNLRNRHSTAPEEHCRRSWSSDSTDS. GTP contacts are provided by residues 81–88 and 190–193; these read GEQGVGKS and NKSD. A calmodulin-binding region spans residues 265–284; the sequence is ARRFWGKIVAKNNKNMAFKL.

Belongs to the small GTPase superfamily. RGK family. As to quaternary structure, interacts with calmodulin in a Ca(2+)-dependent manner. Calmodulin binding significantly decreases GTP binding. Binds ROCK1. In terms of processing, phosphorylated on tyrosine residues.

The protein resides in the cell membrane. Its function is as follows. Could be a regulatory protein, possibly participating in receptor-mediated signal transduction at the plasma membrane. Has guanine nucleotide-binding activity but undetectable intrinsic GTPase activity. This chain is GTP-binding protein GEM (Gem), found in Mus musculus (Mouse).